We begin with the raw amino-acid sequence, 160 residues long: Ribosomal RNA large subunit methyltransferase H (160 aa).

Residues Leu77, Gly109, and 128–133 each bind S-adenosyl-L-methionine; that span reads LSNLTF.

Belongs to the RNA methyltransferase RlmH family. Homodimer.

Its subcellular location is the cytoplasm. It carries out the reaction pseudouridine(1915) in 23S rRNA + S-adenosyl-L-methionine = N(3)-methylpseudouridine(1915) in 23S rRNA + S-adenosyl-L-homocysteine + H(+). Functionally, specifically methylates the pseudouridine at position 1915 (m3Psi1915) in 23S rRNA. The sequence is that of Ribosomal RNA large subunit methyltransferase H from Desulforamulus reducens (strain ATCC BAA-1160 / DSM 100696 / MI-1) (Desulfotomaculum reducens).